The chain runs to 375 residues: Prophage integrase IntE (375 aa).

Positions 82-167 (ITTSTWLDRY…VLIDVFKEAQ (86 aa)) constitute a Core-binding (CB) domain. The region spanning 189-375 (ITRQRLSLEE…RGKGWSKVAL (187 aa)) is the Tyr recombinase domain. Residues R226, K249, H330, R333, and H353 contribute to the active site. A disordered region spans residues 350-375 (LLGHKTQQQTDRYHDDRGKGWSKVAL). Y362 serves as the catalytic O-(3'-phospho-DNA)-tyrosine intermediate.

This sequence belongs to the 'phage' integrase family.

Integrase from the cryptic lambdoid prophage e14. Integrase is necessary for integration of the phage into the host genome by site-specific recombination. In conjunction with excisionase, integrase is also necessary for excision of the prophage from the host genome. In Escherichia coli (strain K12), this protein is Prophage integrase IntE (intE).